A 618-amino-acid polypeptide reads, in one-letter code: DELLA protein SLN1 (618 aa).

The disordered stretch occupies residues 1–36; the sequence is MKREYQDGGGSGGGGDEMGSSRDKMMVSSSEAGEGE. The span at 7–17 shows a compositional bias: gly residues; that stretch reads DGGGSGGGGDE. A DELLA motif motif is present at residues 39–43; it reads DELLA. Disordered stretches follow at residues 106–137 and 159–197; these read LNAP…YFDL and APAD…GAAR. Over residues 108–118 the composition is skewed to pro residues; that stretch reads APPPPLPPAPP. Low complexity-rich tracts occupy residues 119 to 128 and 176 to 197; these read QLNASTSSTV and TGGS…GAAR. The GRAS domain occupies 221–614; it reads VDTQEAGIRL…RPLIATSAWR (394 aa). The segment at 228 to 284 is leucine repeat I (LRI); the sequence is IRLVHALLACAEAVQQENLSAAEALVKQIPLLAASQGGAMRKVAAYFGEALARRVFR. A LxCxE motif motif is present at residues 235 to 239; that stretch reads LACAE. The interval 303 to 368 is VHIID; sequence HAHFYESCPY…GGPPSFRLTG (66 aa). The short motif at 334–338 is the VHIID element; that stretch reads VHVVD. The interval 382 to 421 is leucine repeat II (LRII); it reads QVGWKLAQFAHTIRVDFQYRGLVAATLADLEPFMLQPEGE. The PFYRE stretch occupies residues 431–535; sequence IAVNSVFEMH…EVYLGRQICN (105 aa). The interval 538–614 is SAW; sequence ACEGTERTER…RPLIATSAWR (77 aa).

The protein belongs to the GRAS family. DELLA subfamily. Phosphorylated. In terms of processing, ubiquitinated. Upon GA application it is ubiquitinated, leading to its subsequent degradation. As to expression, apparently restricted to regions where growth is occurring in the leaf blade. Localizes almost exclusively to the basal elongation zone (EZ) for the elongating blades of L1, L2 and L3. More detailed fractionation of the L3 blade shows that in cv. Himalaya, it is preferentially localized to the basal third of the EZ, but its presence can still be detected toward the end of the EZ (at protein level).

The protein resides in the nucleus. In terms of biological role, probable transcriptional regulator that acts as a repressor of the gibberellin (GA) signaling pathway. Probably acts by participating in large multiprotein complexes that repress transcription of GA-inducible genes. Upon GA application, it is degraded by the proteasome, allowing the GA signaling pathway. Acts as a negative regulator of GAMYB gene expression. The protein is DELLA protein SLN1 (SLN1) of Hordeum vulgare (Barley).